Consider the following 307-residue polypeptide: Voltage-dependent anion channel-forming protein sll1024 (307 aa).

Helical transmembrane passes span 26-46 (VIPAIASRVLVCMAFSLGVTL), 54-74 (FSIPIQESIVPSIVLGLLLVF), 226-246 (LIFLYCFITPFQIVNTLHWAT), and 247-267 (AFVVGIIAFTVFGIEEIGVEI).

Belongs to the anion channel-forming bestrophin (TC 1.A.46) family.

It localises to the cell membrane. This Synechocystis sp. (strain ATCC 27184 / PCC 6803 / Kazusa) protein is Voltage-dependent anion channel-forming protein sll1024.